The sequence spans 1779 residues: Fibronectin type III domain-containing protein 1 (1779 aa).

The signal sequence occupies residues 1–29 (MAPEARASPRLLLRAALLLLAALLPVASS). 4 consecutive Fibronectin type-III domains span residues 33-126 (PVDH…KAPR), 103-203 (PNKP…AEED), 207-302 (VPED…TPES), and 307-402 (APEN…IPTT). Positions 400-413 (PTTSSTEASVQPNG) are enriched in polar residues. 4 disordered regions span residues 400–442 (PTTS…MPPA), 459–1108 (NGVA…RNLD), 1120–1227 (EENT…KPNG), and 1330–1401 (PTTT…PPGT). Positions 423-437 (QQPSSSAPKVAASSQ) are enriched in low complexity. Residues 493–506 (NPRSSRLETLNQKQ) show a composition bias toward polar residues. The span at 534–554 (SRKEGMDRRGPSLDPHPHPRV) shows a compositional bias: basic and acidic residues. Composition is skewed to polar residues over residues 557 to 570 (SASS…STDN) and 590 to 607 (SSGS…TSAP). Residues 629 to 640 (ASSSTSRQSHSS) are compositionally biased toward low complexity. The residue at position 651 (Ser-651) is a Phosphoserine. Positions 676–694 (HASSSHTTSRTASSSHPSA) are enriched in low complexity. Ser-699 is subject to Phosphoserine. The segment covering 707–720 (DSDRAAEDTIRRAE) has biased composition (basic and acidic residues). Composition is skewed to polar residues over residues 763 to 784 (PSVS…SLPA) and 861 to 875 (PLSS…STTD). Residues 879–904 (PQTSPASTSRQPSPARPPASRSQPSP) are compositionally biased toward low complexity. Polar residues-rich tracts occupy residues 957–971 (APQN…TYED) and 1003–1020 (VGSQ…SQAG). The segment covering 1085–1097 (LSTSVKKWPSSSS) has biased composition (low complexity). Positions 1098 to 1108 (PRDKYADRNLD) are enriched in basic and acidic residues. 2 stretches are compositionally biased toward polar residues: residues 1147 to 1159 (NPAT…NTHS) and 1166 to 1177 (RAPSSYSSTTPM). Positions 1330–1389 (PTTTMPPSTTTTTVPPTTTLPPTTTTTRRTTTTRRTTTTRRPTTTTRATRRTTTTTTTPE) are enriched in low complexity. Residues 1543–1637 (APRNITVVAM…PSVSFVTESD (95 aa)) form the Fibronectin type-III 5 domain. An N-linked (GlcNAc...) asparagine glycan is attached at Asn-1546.

It localises to the secreted. Functionally, may be an activator of G protein signaling. This Rattus norvegicus (Rat) protein is Fibronectin type III domain-containing protein 1 (Fndc1).